Here is a 417-residue protein sequence, read N- to C-terminus: Gamma-glutamyl phosphate reductase (417 aa).

This sequence belongs to the gamma-glutamyl phosphate reductase family.

The protein localises to the cytoplasm. The catalysed reaction is L-glutamate 5-semialdehyde + phosphate + NADP(+) = L-glutamyl 5-phosphate + NADPH + H(+). It functions in the pathway amino-acid biosynthesis; L-proline biosynthesis; L-glutamate 5-semialdehyde from L-glutamate: step 2/2. Functionally, catalyzes the NADPH-dependent reduction of L-glutamate 5-phosphate into L-glutamate 5-semialdehyde and phosphate. The product spontaneously undergoes cyclization to form 1-pyrroline-5-carboxylate. The protein is Gamma-glutamyl phosphate reductase of Serratia marcescens.